The sequence spans 630 residues: 1-deoxy-D-xylulose-5-phosphate synthase (630 aa).

Residues His80 and 121–123 each bind thiamine diphosphate; that span reads GHS. Residue Asp152 participates in Mg(2+) binding. Residues 153 to 154, Asn181, Tyr288, and Glu370 contribute to the thiamine diphosphate site; that span reads GA. Residue Asn181 coordinates Mg(2+).

The protein belongs to the transketolase family. DXPS subfamily. Homodimer. Mg(2+) serves as cofactor. It depends on thiamine diphosphate as a cofactor.

The catalysed reaction is D-glyceraldehyde 3-phosphate + pyruvate + H(+) = 1-deoxy-D-xylulose 5-phosphate + CO2. The protein operates within metabolic intermediate biosynthesis; 1-deoxy-D-xylulose 5-phosphate biosynthesis; 1-deoxy-D-xylulose 5-phosphate from D-glyceraldehyde 3-phosphate and pyruvate: step 1/1. Functionally, catalyzes the acyloin condensation reaction between C atoms 2 and 3 of pyruvate and glyceraldehyde 3-phosphate to yield 1-deoxy-D-xylulose-5-phosphate (DXP). This Colwellia psychrerythraea (strain 34H / ATCC BAA-681) (Vibrio psychroerythus) protein is 1-deoxy-D-xylulose-5-phosphate synthase.